The chain runs to 473 residues: Argininosuccinate lyase (473 aa).

Ala-2 carries the post-translational modification N-acetylalanine. The residue at position 7 (Lys-7) is an N6-acetyllysine. Ser-27 provides a ligand contact to 2-(N(omega)-L-arginino)succinate. An N6-acetyllysine modification is found at Lys-69. 2-(N(omega)-L-arginino)succinate-binding residues include Asn-114 and Thr-159. Catalysis depends on His-160, which acts as the Proton acceptor. Catalysis depends on Ser-281, which acts as the Proton donor. An N6-acetyllysine modification is found at Lys-288. 2-(N(omega)-L-arginino)succinate is bound by residues Asn-289, Tyr-321, Gln-326, and Lys-329.

Belongs to the lyase 1 family. Argininosuccinate lyase subfamily. Homotetramer. Forms tissue-specific complexes with ASS1, SLC7A1, HSP90AA1 and nitric oxide synthase NOS1, NOS2 or NOS3; the complex maintenance is independent of ASL catalytic function. Acetylation modifies enzyme activity in response to alterations of extracellular nutrient availability. Acetylation increased with trichostin A (TSA) or with nicotinamide (NAM). Glucose increases acetylation by about a factor of 3 with decreasing enzyme activity. Acetylation on Lys-288 is decreased on the addition of extra amino acids resulting in activation of enzyme activity.

It carries out the reaction 2-(N(omega)-L-arginino)succinate = fumarate + L-arginine. It functions in the pathway amino-acid biosynthesis; L-arginine biosynthesis; L-arginine from L-ornithine and carbamoyl phosphate: step 3/3. Its pathway is nitrogen metabolism; urea cycle; L-arginine and fumarate from (N(omega)-L-arginino)succinate: step 1/1. Its activity is regulated as follows. Enzyme activity is regulated by acetylation. Functionally, catalyzes the reversible cleavage of L-argininosuccinate to fumarate and L-arginine, an intermediate step reaction in the urea cycle mostly providing for hepatic nitrogen detoxification into excretable urea as well as de novo L-arginine synthesis in nonhepatic tissues. Essential regulator of intracellular and extracellular L-arginine pools. As part of citrulline-nitric oxide cycle, forms tissue-specific multiprotein complexes with argininosuccinate synthase ASS1, transport protein SLC7A1 and nitric oxide synthase NOS1, NOS2 or NOS3, allowing for cell-autonomous L-arginine synthesis while channeling extracellular L-arginine to nitric oxide synthesis pathway. The chain is Argininosuccinate lyase (ASL) from Bos taurus (Bovine).